The primary structure comprises 132 residues: Small ribosomal subunit protein uS11 (132 aa).

Belongs to the universal ribosomal protein uS11 family. In terms of assembly, part of the 30S ribosomal subunit. Interacts with proteins S7 and S18. Binds to IF-3.

Its function is as follows. Located on the platform of the 30S subunit, it bridges several disparate RNA helices of the 16S rRNA. Forms part of the Shine-Dalgarno cleft in the 70S ribosome. This is Small ribosomal subunit protein uS11 from Bifidobacterium animalis subsp. lactis (strain AD011).